The primary structure comprises 419 residues: MRSWSVPEVPALPGRGPRVHLHDTATGGLVPVGPEAGTATLYVCGITPYDATHLGHANTYVAFDLLGRAWRDAGLDVRYVQNVTDVDDPLLERAEATGVDWRDLAESQVELFRGDMEALSVVPPQRYLGVVEAVDLVAEAVRDLLAAGAAYRVPGTDGGPDGDVYFPVDADAAFGTVGGYDLETMLALSAERGGDPQRPGKRNPLDPLLWRVERPGEPAWEAGELGRGRPGWHIECTAIALEHLGMPIDVQAGGSDLVFPHHEMGAAHAHLLRPRARPFARAYAHSGMVALDGEKMSKSKGNLVLVSRLVAAGVPAAVVRLAIVDHHWRTDWEWTDEVLAQARARHERWSAAVAAPAGPPAEALLATVRERLADDLDAPGAVAAVDAWVEQARTTAGTDAQAPDLVRRTVSALLGVVLP.

Residues Met-1–His-20 form a disordered region. A Zn(2+)-binding site is contributed by Cys-44. Residues Cys-44–Thr-47, Thr-59, and Asn-82–Thr-84 contribute to the L-cysteinyl-5'-AMP site. Positions Ile-46–His-56 match the 'HIGH' region motif. The 'ERGGDP' region motif lies at Glu-191–Pro-196. An L-cysteinyl-5'-AMP-binding site is contributed by Trp-232. Cys-236 lines the Zn(2+) pocket. Position 254–256 (Gly-254–Asp-256) interacts with L-cysteinyl-5'-AMP. A Zn(2+)-binding site is contributed by His-261. Position 289 (Val-289) interacts with L-cysteinyl-5'-AMP. The short motif at Lys-295 to Ser-299 is the 'KMSKS' region element.

It belongs to the class-I aminoacyl-tRNA synthetase family. MshC subfamily. Monomer. Zn(2+) is required as a cofactor.

It catalyses the reaction 1D-myo-inositol 2-amino-2-deoxy-alpha-D-glucopyranoside + L-cysteine + ATP = 1D-myo-inositol 2-(L-cysteinylamino)-2-deoxy-alpha-D-glucopyranoside + AMP + diphosphate + H(+). Catalyzes the ATP-dependent condensation of GlcN-Ins and L-cysteine to form L-Cys-GlcN-Ins. In Kineococcus radiotolerans (strain ATCC BAA-149 / DSM 14245 / SRS30216), this protein is L-cysteine:1D-myo-inositol 2-amino-2-deoxy-alpha-D-glucopyranoside ligase.